The chain runs to 654 residues: Protein fem-1 homolog A-A (654 aa).

7 ANK repeats span residues D2–L31, G40–A70, E82–R111, T115–V145, H149–R178, K182–R211, and Y214–Q243. Residue S108 is modified to Phosphoserine. Positions E242–P265 are disordered. Residues G253 to S263 are compositionally biased toward polar residues. 2 TPR repeats span residues V283–G317 and S375–N408. 2 ANK repeats span residues N519–S561 and D565–A594. S608 carries the phosphoserine modification.

The protein belongs to the fem-1 family. Component of a CRL2 E3 ubiquitin-protein ligase complex, also named ECS (Elongin BC-CUL2/5-SOCS-box protein) complex, composed of CUL2, Elongin BC (ELOB and ELOC), RBX1 and substrate-specific adapter FEM1A. Interacts with PTGER4. Interacts with NFKB1; the interaction is direct. Post-translationally, phosphorylated; highly phosphorylated in myoblasts and myotubes. Phosphorylation at Ser-108 and Ser-608 promote PGE2-EP4-mediated inhibition of inflammation. Dephosphorylated by protein phosphatase 2A (PP2A). In terms of tissue distribution, preferentially expressed in cardiac muscle, brain and liver (at protein level). Also expressed in skeletal muscle.

The protein localises to the mitochondrion. Its subcellular location is the cytoplasm. It participates in protein modification; protein ubiquitination. Substrate-recognition component of a Cul2-RING (CRL2) E3 ubiquitin-protein ligase complex of the DesCEND (destruction via C-end degrons) pathway, which recognizes a C-degron located at the extreme C terminus of target proteins, leading to their ubiquitination and degradation. The C-degron recognized by the DesCEND pathway is usually a motif of less than ten residues and can be present in full-length proteins, truncated proteins or proteolytically cleaved forms. The CRL2(FEM1A) complex specifically recognizes proteins with an arginine at the C-terminus: recognizes and binds proteins ending with -Lys/Arg-Xaa-Arg and -Lys/Arg-Xaa-Xaa-Arg C-degrons, such as SIL1 or OR51B2, leading to their ubiquitination and degradation. Involved in PGE2-EP4-mediated inhibition of inflammation of macrophages via interaction with NFKB1 and PTGER4. Promotes inflammation in brain microglia through MAP2K4/MKK4-mediated signaling. The chain is Protein fem-1 homolog A-A from Mus musculus (Mouse).